The sequence spans 908 residues: Translation initiation factor IF-2 (908 aa).

Disordered stretches follow at residues 122–180 (PVVE…VDDA) and 203–267 (EKAR…AVKK). The span at 132 to 143 (VAAEPEVVEAPE) shows a compositional bias: acidic residues. Over residues 157–166 (EEPAAPAAPV) the composition is skewed to low complexity. A compositionally biased stretch (basic and acidic residues) spans 223–248 (AKEDARPTKHVEDLAKLKKPHDKKDE). Residues 256 to 267 (KHNKKAGKAVKK) show a composition bias toward basic residues. One can recognise a tr-type G domain in the interval 409–578 (PRAPIVTVMG…ALQAELLELS (170 aa)). Positions 418 to 425 (GHVDHGKT) are G1. 418–425 (GHVDHGKT) contacts GTP. The G2 stretch occupies residues 443–447 (GITQH). The G3 stretch occupies residues 464–467 (DTPG). GTP-binding positions include 464 to 468 (DTPGH) and 518 to 521 (NKMD). A G4 region spans residues 518–521 (NKMD). A G5 region spans residues 554–556 (SAH).

The protein belongs to the TRAFAC class translation factor GTPase superfamily. Classic translation factor GTPase family. IF-2 subfamily.

It is found in the cytoplasm. One of the essential components for the initiation of protein synthesis. Protects formylmethionyl-tRNA from spontaneous hydrolysis and promotes its binding to the 30S ribosomal subunits. Also involved in the hydrolysis of GTP during the formation of the 70S ribosomal complex. The sequence is that of Translation initiation factor IF-2 from Saccharophagus degradans (strain 2-40 / ATCC 43961 / DSM 17024).